A 225-amino-acid chain; its full sequence is UPF0758 protein Mhun_2739 (225 aa).

The MPN domain occupies 102–225; sequence RITEPDHILK…VTSLRSLGYL (124 aa). H174, H176, and D187 together coordinate Zn(2+). The JAMM motif signature appears at 174 to 187; sequence HNHPSGNPEPSSED.

It belongs to the UPF0758 family.

In Methanospirillum hungatei JF-1 (strain ATCC 27890 / DSM 864 / NBRC 100397 / JF-1), this protein is UPF0758 protein Mhun_2739.